Here is a 245-residue protein sequence, read N- to C-terminus: Homeobox protein Hox-A4a (245 aa).

The interval D34–C99 is disordered. A compositionally biased stretch (basic and acidic residues) spans Y35–S51. Composition is skewed to polar residues over residues P53–N73 and Q82–C99. Residues V126–K131 carry the Antp-type hexapeptide motif. A DNA-binding region (homeobox) is located at residues P147–H206. The segment at D205–L245 is disordered. Over residues K212 to S221 the composition is skewed to polar residues. The segment covering T230–L245 has biased composition (low complexity).

The protein belongs to the Antp homeobox family. Deformed subfamily.

Its subcellular location is the nucleus. In terms of biological role, sequence-specific transcription factor which is part of a developmental regulatory system that provides cells with specific positional identities on the anterior-posterior axis. The sequence is that of Homeobox protein Hox-A4a (hoxa4a) from Danio rerio (Zebrafish).